A 307-amino-acid chain; its full sequence is Protein EI24 homolog (307 aa).

2 consecutive transmembrane segments (helical) span residues 53–73 (FIHCIFLNGIIFLGTYLIYLY) and 92–112 (MFTIIYFSLWVYPVYIFSIIA). Asn135 carries N-linked (GlcNAc...) asparagine glycosylation. Helical transmembrane passes span 153 to 173 (LFGVILVMSAIIAFIPYTNFI), 175 to 195 (FVIITWLYSFWCFDYKWILRG), 225 to 245 (FFFPMLIGNAIFSILYPLFII), and 260 to 280 (GILPKQIPIFYVPEIIVNVIL).

It belongs to the EI24 family.

It is found in the membrane. This is Protein EI24 homolog from Dictyostelium discoideum (Social amoeba).